A 59-amino-acid chain; its full sequence is Preprotein translocase subunit SecG (59 aa).

At M1–K35 the chain is on the cytoplasmic side. A helical transmembrane segment spans residues V36–P56. The Extracellular portion of the chain corresponds to P57–L59.

The protein belongs to the SEC61-beta family. As to quaternary structure, component of the protein translocase complex. Heterotrimer consisting of alpha (SecY), beta (SecG) and gamma (SecE) subunits. Can form oligomers of the heterotrimer.

It is found in the cell membrane. Its function is as follows. Involved in protein export. The function of the beta subunit is unknown, but it may be involved in stabilization of the trimeric complex. This chain is Preprotein translocase subunit SecG, found in Sulfolobus acidocaldarius (strain ATCC 33909 / DSM 639 / JCM 8929 / NBRC 15157 / NCIMB 11770).